Consider the following 484-residue polypeptide: tRNA sulfurtransferase (484 aa).

The THUMP domain maps to 63-167; that stretch reads QAFGERLACI…GDKLYMVTKR (105 aa). ATP contacts are provided by residues 185-186, Lys-267, Gly-289, and Gln-298; that span reads LI. Cys-346 and Cys-458 are disulfide-bonded. Residues 406-484 enclose the Rhodanese domain; that stretch reads IDTNEVVIDI…GYHNVKVYRP (79 aa). The active-site Cysteine persulfide intermediate is the Cys-458.

It belongs to the ThiI family.

The protein localises to the cytoplasm. It carries out the reaction [ThiI sulfur-carrier protein]-S-sulfanyl-L-cysteine + a uridine in tRNA + 2 reduced [2Fe-2S]-[ferredoxin] + ATP + H(+) = [ThiI sulfur-carrier protein]-L-cysteine + a 4-thiouridine in tRNA + 2 oxidized [2Fe-2S]-[ferredoxin] + AMP + diphosphate. The enzyme catalyses [ThiS sulfur-carrier protein]-C-terminal Gly-Gly-AMP + S-sulfanyl-L-cysteinyl-[cysteine desulfurase] + AH2 = [ThiS sulfur-carrier protein]-C-terminal-Gly-aminoethanethioate + L-cysteinyl-[cysteine desulfurase] + A + AMP + 2 H(+). The protein operates within cofactor biosynthesis; thiamine diphosphate biosynthesis. Its function is as follows. Catalyzes the ATP-dependent transfer of a sulfur to tRNA to produce 4-thiouridine in position 8 of tRNAs, which functions as a near-UV photosensor. Also catalyzes the transfer of sulfur to the sulfur carrier protein ThiS, forming ThiS-thiocarboxylate. This is a step in the synthesis of thiazole, in the thiamine biosynthesis pathway. The sulfur is donated as persulfide by IscS. In Shewanella sp. (strain MR-4), this protein is tRNA sulfurtransferase.